A 265-amino-acid polypeptide reads, in one-letter code: Secreted RxLR effector protein 16 (265 aa).

Residues 1–19 form the signal peptide; the sequence is MRGAFYIAIALLIVRSRTA. The RxLR-dEER signature appears at 46–61; sequence RYLRGGLALSATNEER. N-linked (GlcNAc...) asparagine glycosylation is found at Asn-170, Asn-219, and Asn-240.

It belongs to the RxLR effector family. In terms of processing, N-glycosylated. The putative N-glycosylation site at position 240 is essential for cell death-inducing activity.

Its subcellular location is the secreted. It localises to the host nucleus. Effector that acts as an elicitor that induces cell death and promotes ROS accumulation in Nicotian benthamiana. RxLR16-triggered cell death is dependent on SGT1, HSP90 and RAR1, but independent of the somatic embryogenesis receptor-like kinase SERK3/BAK1, indicating that it acts independently of the detection of cell surface pattern recognition receptors. Enhances the expressional levels of defense-associated genes involved in the salicylic acid-, jasmonate acid-, and ethylene-mediated signal transduction, resulting in disease resistance. However, as some other Plasmopara viticola RxLR effectors including RxLR1, RxLR10, RxLR30 and RxLR25, can suppress defense responses and disease resistance induced by RxLR16, it may not trigger host cell death or immune responses during physiological infection under natural conditions. The protein is Secreted RxLR effector protein 16 of Plasmopara viticola (Downy mildew of grapevine).